The chain runs to 148 residues: Arginine repressor (148 aa).

Belongs to the ArgR family.

The protein localises to the cytoplasm. The protein operates within amino-acid biosynthesis; L-arginine biosynthesis [regulation]. Regulates arginine biosynthesis genes. The protein is Arginine repressor of Pelodictyon phaeoclathratiforme (strain DSM 5477 / BU-1).